The sequence spans 165 residues: NADPH-dependent 7-cyano-7-deazaguanine reductase (165 aa).

Cys56 serves as the catalytic Thioimide intermediate. Asp63 acts as the Proton donor in catalysis. Residues Val78–Ser80 and His97–Glu98 contribute to the substrate site. Asp163 and Arg165 together coordinate Mg(2+).

Belongs to the GTP cyclohydrolase I family. QueF type 1 subfamily. As to quaternary structure, forms an asymmetric tunnel-fold homodecamer of two head-to-head facing pentamers, harboring 10 active sites at the intersubunit interfaces. The cofactor is Does not require a metal cofactor..

The protein localises to the cytoplasm. It catalyses the reaction 7-aminomethyl-7-carbaguanine + 2 NADP(+) = 7-cyano-7-deazaguanine + 2 NADPH + 3 H(+). It participates in tRNA modification; tRNA-queuosine biosynthesis. Its activity is regulated as follows. Activity is strongly inhibited by Cu(2+) and Fe(3+). In terms of biological role, catalyzes the NADPH-dependent reduction of 7-cyano-7-deazaguanine (preQ0) to 7-aminomethyl-7-deazaguanine (preQ1), a late step in the queuosine pathway. This is NADPH-dependent 7-cyano-7-deazaguanine reductase (queF) from Bacillus subtilis (strain 168).